The sequence spans 483 residues: ATP synthase subunit beta (483 aa).

168 to 175 (GGAGVGKT) contributes to the ATP binding site.

The protein belongs to the ATPase alpha/beta chains family. In terms of assembly, F-type ATPases have 2 components, CF(1) - the catalytic core - and CF(0) - the membrane proton channel. CF(1) has five subunits: alpha(3), beta(3), gamma(1), delta(1), epsilon(1). CF(0) has three main subunits: a(1), b(2) and c(9-12). The alpha and beta chains form an alternating ring which encloses part of the gamma chain. CF(1) is attached to CF(0) by a central stalk formed by the gamma and epsilon chains, while a peripheral stalk is formed by the delta and b chains.

The protein resides in the cell membrane. It catalyses the reaction ATP + H2O + 4 H(+)(in) = ADP + phosphate + 5 H(+)(out). Functionally, produces ATP from ADP in the presence of a proton gradient across the membrane. The catalytic sites are hosted primarily by the beta subunits. The protein is ATP synthase subunit beta of Mycobacterium ulcerans (strain Agy99).